The primary structure comprises 54 residues: Small ribosomal subunit protein uS14 (54 aa).

4 residues coordinate Zn(2+): Cys-19, Cys-22, Cys-37, and Cys-40.

This sequence belongs to the universal ribosomal protein uS14 family. Zinc-binding uS14 subfamily. In terms of assembly, part of the 30S ribosomal subunit. Zn(2+) serves as cofactor.

Binds 16S rRNA, required for the assembly of 30S particles. In Pyrobaculum aerophilum (strain ATCC 51768 / DSM 7523 / JCM 9630 / CIP 104966 / NBRC 100827 / IM2), this protein is Small ribosomal subunit protein uS14.